The primary structure comprises 148 residues: Putative antiporter subunit mnhG2 (148 aa).

A run of 3 helical transmembrane segments spans residues 11–31 (IAAI…IGLI), 51–71 (VLLT…YLSV), and 72–92 (RLIL…HLIS). Residues 125–148 (EQLKQRAHEREERRRKTYEKEHDY) form a disordered region. Residues 127–148 (LKQRAHEREERRRKTYEKEHDY) show a composition bias toward basic and acidic residues.

This sequence belongs to the CPA3 antiporters (TC 2.A.63) subunit G family. In terms of assembly, may form a heterooligomeric complex that consists of seven subunits: mnhA2, mnhB2, mnhC2, mnhD2, mnhE2, mnhF2 and mnhG2.

The protein resides in the cell membrane. This is Putative antiporter subunit mnhG2 (mnhG2) from Staphylococcus saprophyticus subsp. saprophyticus (strain ATCC 15305 / DSM 20229 / NCIMB 8711 / NCTC 7292 / S-41).